We begin with the raw amino-acid sequence, 141 residues long: Hemoglobin subunit alpha (141 aa).

One can recognise a Globin domain in the interval 1 to 141 (VLSPGDKSNI…VSTVLTSKYR (141 aa)). Ser3 carries the phosphoserine modification. Residues Lys7 and Lys11 each carry the N6-succinyllysine modification. Residue Lys16 is modified to N6-acetyllysine; alternate. Lys16 is subject to N6-succinyllysine; alternate. Tyr24 is subject to Phosphotyrosine. Ser35 is subject to Phosphoserine. N6-succinyllysine is present on Lys40. Ser49 carries the post-translational modification Phosphoserine. His58 contributes to the O2 binding site. Heme b is bound at residue His87. A Phosphoserine modification is found at Ser102. At Thr108 the chain carries Phosphothreonine. The residue at position 124 (Ser124) is a Phosphoserine. A phosphothreonine mark is found at Thr134 and Thr137. Ser138 is modified (phosphoserine).

It belongs to the globin family. As to quaternary structure, heterotetramer of two alpha chains and two beta chains. Red blood cells.

Functionally, involved in oxygen transport from the lung to the various peripheral tissues. Its function is as follows. Hemopressin acts as an antagonist peptide of the cannabinoid receptor CNR1. Hemopressin-binding efficiently blocks cannabinoid receptor CNR1 and subsequent signaling. In Tupaia glis (Common tree shrew), this protein is Hemoglobin subunit alpha (HBA).